The following is a 73-amino-acid chain: Gastricsin (73 aa).

Positions 1 to 43 (SVIKVPLKKLKSIRQAMKEKGLLEEFLKTHKYDPAQRYRIGDI) are cleaved as a propeptide — activation peptide. Residues 57–73 (YFGEISIGTPPQNFLVL) enclose the Peptidase A1 domain.

The protein belongs to the peptidase A1 family.

Its subcellular location is the secreted. It catalyses the reaction More restricted specificity than pepsin A, but shows preferential cleavage at Tyr-|-Xaa bonds. High activity on hemoglobin.. Its function is as follows. Hydrolyzes a variety of proteins. This Sus scrofa (Pig) protein is Gastricsin (PGC).